The following is a 404-amino-acid chain: Argininosuccinate synthase (404 aa).

15–23 (AYSGGLDTS) is a binding site for ATP. Y94 is a binding site for L-citrulline. G124 contacts ATP. L-aspartate contacts are provided by T126, N130, and D131. N130 lines the L-citrulline pocket. R134, S182, E266, and Y278 together coordinate L-citrulline.

The protein belongs to the argininosuccinate synthase family. Type 1 subfamily. As to quaternary structure, homotetramer.

The protein resides in the cytoplasm. The enzyme catalyses L-citrulline + L-aspartate + ATP = 2-(N(omega)-L-arginino)succinate + AMP + diphosphate + H(+). It participates in amino-acid biosynthesis; L-arginine biosynthesis; L-arginine from L-ornithine and carbamoyl phosphate: step 2/3. The polypeptide is Argininosuccinate synthase (Streptomyces avermitilis (strain ATCC 31267 / DSM 46492 / JCM 5070 / NBRC 14893 / NCIMB 12804 / NRRL 8165 / MA-4680)).